Here is a 466-residue protein sequence, read N- to C-terminus: Asparagine--tRNA ligase (466 aa).

It belongs to the class-II aminoacyl-tRNA synthetase family. In terms of assembly, homodimer.

It is found in the cytoplasm. The catalysed reaction is tRNA(Asn) + L-asparagine + ATP = L-asparaginyl-tRNA(Asn) + AMP + diphosphate + H(+). The sequence is that of Asparagine--tRNA ligase from Shewanella sp. (strain MR-4).